The following is a 465-amino-acid chain: 23S rRNA (uracil(1939)-C(5))-methyltransferase RlmD (465 aa).

The segment at 1–20 (MSEAVPLSTPGASHAGAATD) is disordered. Residues 12–80 (ASHAGAATDR…PTYEQAQVVD (69 aa)) form the TRAM domain. Residues C93, C99, C102, and C181 each coordinate [4Fe-4S] cluster. S-adenosyl-L-methionine-binding residues include Q289, F318, N323, E339, N367, and D388. Residue C421 is the Nucleophile of the active site.

The protein belongs to the class I-like SAM-binding methyltransferase superfamily. RNA M5U methyltransferase family. RlmD subfamily.

It catalyses the reaction uridine(1939) in 23S rRNA + S-adenosyl-L-methionine = 5-methyluridine(1939) in 23S rRNA + S-adenosyl-L-homocysteine + H(+). Functionally, catalyzes the formation of 5-methyl-uridine at position 1939 (m5U1939) in 23S rRNA. The polypeptide is 23S rRNA (uracil(1939)-C(5))-methyltransferase RlmD (Burkholderia thailandensis (strain ATCC 700388 / DSM 13276 / CCUG 48851 / CIP 106301 / E264)).